The primary structure comprises 265 residues: Serine protease 1 (265 aa).

The signal sequence occupies residues 1–21 (MKLFVFLALAVAAATAVPAPA). Positions 22–35 (QKLTPTPIKDIQGR) are excised as a propeptide. Residues 36–262 (ITNGYPAYEG…YLDWIRDNTG (227 aa)) form the Peptidase S1 domain. Cysteines 63 and 79 form a disulfide. Active-site charge relay system residues include histidine 78 and aspartate 123. 2 cysteine pairs are disulfide-bonded: cysteine 189/cysteine 201 and cysteine 211/cysteine 239. The Charge relay system role is filled by serine 215.

It belongs to the peptidase S1 family. As to expression, abundantly expressed in the larval gut.

Functionally, major function may be to aid in digestion. This is Serine protease 1 from Drosophila melanogaster (Fruit fly).